The sequence spans 145 residues: Flagellar assembly factor FliW (145 aa).

This sequence belongs to the FliW family. Interacts with translational regulator CsrA and flagellin(s).

The protein localises to the cytoplasm. Acts as an anti-CsrA protein, binds CsrA and prevents it from repressing translation of its target genes, one of which is flagellin. Binds to flagellin and participates in the assembly of the flagellum. This Anoxybacillus flavithermus (strain DSM 21510 / WK1) protein is Flagellar assembly factor FliW.